The primary structure comprises 220 residues: 7-cyano-7-deazaguanine synthase (220 aa).

10–20 (FSGGQDSTTCL) contacts ATP. Positions 186, 195, 198, and 201 each coordinate Zn(2+).

It belongs to the QueC family. In terms of assembly, homodimer. Zn(2+) is required as a cofactor.

The catalysed reaction is 7-carboxy-7-deazaguanine + NH4(+) + ATP = 7-cyano-7-deazaguanine + ADP + phosphate + H2O + H(+). It participates in purine metabolism; 7-cyano-7-deazaguanine biosynthesis. Catalyzes the ATP-dependent conversion of 7-carboxy-7-deazaguanine (CDG) to 7-cyano-7-deazaguanine (preQ(0)). The polypeptide is 7-cyano-7-deazaguanine synthase (Bacillus cereus (strain B4264)).